Reading from the N-terminus, the 122-residue chain is Ribosome-binding factor A (122 aa).

Belongs to the RbfA family. In terms of assembly, monomer. Binds 30S ribosomal subunits, but not 50S ribosomal subunits or 70S ribosomes.

The protein localises to the cytoplasm. Functionally, one of several proteins that assist in the late maturation steps of the functional core of the 30S ribosomal subunit. Associates with free 30S ribosomal subunits (but not with 30S subunits that are part of 70S ribosomes or polysomes). Required for efficient processing of 16S rRNA. May interact with the 5'-terminal helix region of 16S rRNA. The polypeptide is Ribosome-binding factor A (Caldanaerobacter subterraneus subsp. tengcongensis (strain DSM 15242 / JCM 11007 / NBRC 100824 / MB4) (Thermoanaerobacter tengcongensis)).